A 106-amino-acid polypeptide reads, in one-letter code: UPF0145 protein CKL_2433 (106 aa).

This sequence belongs to the UPF0145 family.

This chain is UPF0145 protein CKL_2433, found in Clostridium kluyveri (strain ATCC 8527 / DSM 555 / NBRC 12016 / NCIMB 10680 / K1).